An 898-amino-acid chain; its full sequence is Translation initiation factor IF-2 (898 aa).

Disordered stretches follow at residues 51 to 70 (RKSH…LKRK) and 114 to 303 (LAAE…KQHG). 2 stretches are compositionally biased toward basic and acidic residues: residues 114–171 (LAAE…EKSK) and 184–258 (PAKE…DDKG). The region spanning 398 to 567 (HRAPVVTIMG…LLQSELLELQ (170 aa)) is the tr-type G domain. The tract at residues 407-414 (GHVDHGKT) is G1. Position 407–414 (407–414 (GHVDHGKT)) interacts with GTP. Positions 432–436 (GITQH) are G2. The tract at residues 453–456 (DTPG) is G3. GTP is bound by residues 453-457 (DTPGH) and 507-510 (NKID). The tract at residues 507–510 (NKID) is G4. A G5 region spans residues 543–545 (SAH).

It belongs to the TRAFAC class translation factor GTPase superfamily. Classic translation factor GTPase family. IF-2 subfamily.

The protein resides in the cytoplasm. Its function is as follows. One of the essential components for the initiation of protein synthesis. Protects formylmethionyl-tRNA from spontaneous hydrolysis and promotes its binding to the 30S ribosomal subunits. Also involved in the hydrolysis of GTP during the formation of the 70S ribosomal complex. The polypeptide is Translation initiation factor IF-2 (Alcanivorax borkumensis (strain ATCC 700651 / DSM 11573 / NCIMB 13689 / SK2)).